A 649-amino-acid polypeptide reads, in one-letter code: MRINVDKYLFIGRKKSEFFSACRELGAVEFLAKNKLKDSENVRRISEGLKTLNLLTNKYSPSDLVLVKSGYLTTEQLLQEIFDLNHEITTITDSLKALSKEIFRVKPLGNFSSEEIRELTLKTGLSVRFFYKKHIEGAPLEVEEENVFYLATAYNYDYYVVIGVVSLSKDIFTEIEAPRSVGELREEEEHLQTLLRKKKARVCELYAYREELLEALCEQCNEQTLQHAEASTEDLFDDKVFSALGWVIVDRLTEVEKLCNSLGVYLERVQPDPDEVIPTYLENHGLGALGESLVNIYDTPASTDKDPSLWVFLSFFVFFSMIINDAGYGLIFLATSLFLSFKARKQVKHSLALKRFLKMFMILGGGCVCWGGATTSFFGVSVSYTSPFREYSLTHFLAMKKAEYYLKERPKGYKELVHDYPVLKDKKTPKEFLLAQGTSSGDSVYKAVVYDKFTDNILMEIALLVGVVHLSLGMLRYCRQRYSSIGWVVFMCGAYMYLPIYLQAVSLIHYALHVPYELGGQVGYYVTFIGLGIAVLGGIIQRGLRGLDEVTAVIQVFSDVLSYLRLYALSLAGAMVGNTVMVMSERFSPAVGVLIIIFGHTVNIALSIMGGVIHGLRLNFIEWYHYSFDGGGRLLHPLKRVICQKSQNI.

A run of 7 helical transmembrane segments spans residues 312–332 (FLSFFVFFSMIINDAGYGLIF), 360–380 (FMILGGGCVCWGGATTSFFGV), 455–475 (DNILMEIALLVGVVHLSLGML), 485–505 (IGWVVFMCGAYMYLPIYLQAV), 520–540 (GQVGYYVTFIGLGIAVLGGII), 556–576 (VFSDVLSYLRLYALSLAGAMV), and 593–613 (VLIIIFGHTVNIALSIMGGVI).

The protein belongs to the V-ATPase 116 kDa subunit family.

It is found in the cell membrane. Produces ATP from ADP in the presence of a proton gradient across the membrane. In Chlamydia muridarum (strain MoPn / Nigg), this protein is V-type ATP synthase subunit I (atpI).